We begin with the raw amino-acid sequence, 156 residues long: Small ribosomal subunit protein uS7 (156 aa).

The protein belongs to the universal ribosomal protein uS7 family. Part of the 30S ribosomal subunit. Contacts proteins S9 and S11.

Its function is as follows. One of the primary rRNA binding proteins, it binds directly to 16S rRNA where it nucleates assembly of the head domain of the 30S subunit. Is located at the subunit interface close to the decoding center, probably blocks exit of the E-site tRNA. The polypeptide is Small ribosomal subunit protein uS7 (Nocardioides sp. (strain ATCC BAA-499 / JS614)).